We begin with the raw amino-acid sequence, 273 residues long: Formamidopyrimidine-DNA glycosylase (273 aa).

P2 functions as the Schiff-base intermediate with DNA in the catalytic mechanism. The active-site Proton donor is E3. The Proton donor; for beta-elimination activity role is filled by K58. Residues H92, R111, and K153 each coordinate DNA. The segment at 238–272 adopts an FPG-type zinc-finger fold; it reads KVYGREGQSCLSCSSTIIKIKHSGRSTFYCKTCQY. R262 acts as the Proton donor; for delta-elimination activity in catalysis.

The protein belongs to the FPG family. In terms of assembly, monomer. It depends on Zn(2+) as a cofactor.

The catalysed reaction is Hydrolysis of DNA containing ring-opened 7-methylguanine residues, releasing 2,6-diamino-4-hydroxy-5-(N-methyl)formamidopyrimidine.. It carries out the reaction 2'-deoxyribonucleotide-(2'-deoxyribose 5'-phosphate)-2'-deoxyribonucleotide-DNA = a 3'-end 2'-deoxyribonucleotide-(2,3-dehydro-2,3-deoxyribose 5'-phosphate)-DNA + a 5'-end 5'-phospho-2'-deoxyribonucleoside-DNA + H(+). Functionally, involved in base excision repair of DNA damaged by oxidation or by mutagenic agents. Acts as a DNA glycosylase that recognizes and removes damaged bases. Has a preference for oxidized purines, such as 7,8-dihydro-8-oxoguanine (8-oxoG). Has AP (apurinic/apyrimidinic) lyase activity and introduces nicks in the DNA strand. Cleaves the DNA backbone by beta-delta elimination to generate a single-strand break at the site of the removed base with both 3'- and 5'-phosphates. The protein is Formamidopyrimidine-DNA glycosylase of Rickettsia africae (strain ESF-5).